Here is a 74-residue protein sequence, read N- to C-terminus: Mu-conotoxin-like T3.1 (74 aa).

The first 19 residues, 1–19, serve as a signal peptide directing secretion; it reads MSKLGVLLTICLLLFPLTA. A propeptide spanning residues 20–74 is cleaved from the precursor; sequence LPMDGDEPADRPAERMQDNISSEQHPLFEERHGCCKGPEGCSSRECRPQHCCGRR. 3 disulfide bridges follow: Cys-53–Cys-65, Cys-54–Cys-70, and Cys-60–Cys-71. At Pro-57 the chain carries 4-hydroxyproline. 2 positions are modified to 4-carboxyglutamate: Glu-58 and Glu-64. Pro-67 carries the 4-hydroxyproline modification. At Cys-71 the chain carries Cysteine amide.

It belongs to the conotoxin M superfamily. As to expression, expressed by the venom duct.

It is found in the secreted. Functionally, mu-conotoxins block voltage-gated sodium channels (Nav). In vitro, this synthetic peptide displays a low blocking effect in mouse extensor digitorum longus muscles (IC(50)=616 nM). In Conus tulipa (Fish-hunting cone snail), this protein is Mu-conotoxin-like T3.1.